The primary structure comprises 710 residues: E3 ubiquitin-protein ligase TRIM9 (710 aa).

The RING-type zinc finger occupies 10–50 (CPVCGSFYREPIILPCSHNICQACARNILVQTPESESPQSR). Residue threonine 41 is modified to Phosphothreonine. Serine 44, serine 46, serine 49, and serine 53 each carry phosphoserine. 2 consecutive B box-type zinc fingers follow at residues 163-212 (AAAL…LVPP) and 224-266 (RKVS…VKAL). Residues cysteine 168, cysteine 171, cysteine 193, histidine 198, cysteine 229, histidine 232, cysteine 252, and histidine 258 each coordinate Zn(2+). Residues 273–340 (HKSQLSQALN…KAQLLARVNK (68 aa)) adopt a coiled-coil conformation. In terms of domain architecture, COS spans 374–432 (IKENDPSGFLQISDALIRRVHLTEDQWGKGTLTPRMTTDFDLSLDNSPLLQSIHQLDFV). The Fibronectin type-III domain maps to 440 to 535 (VPATPILQLE…KTLVLQTSEV (96 aa)). The B30.2/SPRY domain occupies 533–702 (SEVAWFAFDP…LHTGLQVPDF (170 aa)).

Belongs to the TRIM/RBCC family. As to quaternary structure, interacts with SNAP25. Auto-ubiquitinated.

Its subcellular location is the cytoplasm. It is found in the cell projection. The protein resides in the dendrite. The protein localises to the cytoplasmic vesicle. It localises to the secretory vesicle. Its subcellular location is the synaptic vesicle. It is found in the synapse. The protein resides in the cytoskeleton. The catalysed reaction is S-ubiquitinyl-[E2 ubiquitin-conjugating enzyme]-L-cysteine + [acceptor protein]-L-lysine = [E2 ubiquitin-conjugating enzyme]-L-cysteine + N(6)-ubiquitinyl-[acceptor protein]-L-lysine.. Its pathway is protein modification; protein ubiquitination. In terms of biological role, E3 ubiquitin-protein ligase which ubiquitinates itself in cooperation with an E2 enzyme UBE2D2/UBC4 and serves as a targeting signal for proteasomal degradation. May play a role in regulation of neuronal functions. May act as a regulator of synaptic vesicle exocytosis by controlling the availability of SNAP25 for the SNARE complex formation. This chain is E3 ubiquitin-protein ligase TRIM9 (TRIM9), found in Bos taurus (Bovine).